The primary structure comprises 385 residues: Lipid-A-disaccharide synthase (385 aa).

It belongs to the LpxB family.

The enzyme catalyses 2-N,3-O-bis[(3R)-3-hydroxytetradecanoyl]-alpha-D-glucosaminyl 1-phosphate + UDP-2-N,3-O-bis[(3R)-3-hydroxytetradecanoyl]-alpha-D-glucosamine = lipid A disaccharide (E. coli) + UDP + H(+). The catalysed reaction is a lipid X + a UDP-2-N,3-O-bis[(3R)-3-hydroxyacyl]-alpha-D-glucosamine = a lipid A disaccharide + UDP + H(+). It participates in glycolipid biosynthesis; lipid IV(A) biosynthesis; lipid IV(A) from (3R)-3-hydroxytetradecanoyl-[acyl-carrier-protein] and UDP-N-acetyl-alpha-D-glucosamine: step 5/6. In terms of biological role, condensation of UDP-2,3-diacylglucosamine and 2,3-diacylglucosamine-1-phosphate to form lipid A disaccharide, a precursor of lipid A, a phosphorylated glycolipid that anchors the lipopolysaccharide to the outer membrane of the cell. This is Lipid-A-disaccharide synthase from Wigglesworthia glossinidia brevipalpis.